The sequence spans 404 residues: Corticosteroid-binding globulin (404 aa).

The N-terminal stretch at 1–22 is a signal peptide; it reads MLPTLYTCLLWLSTSGLWTVQA. N-linked (GlcNAc...) asparagine glycans are attached at residues asparagine 95, asparagine 119, and asparagine 175. Cortisol is bound at residue glutamine 253. An N-linked (GlcNAc...) asparagine glycan is attached at asparagine 259. Residue glutamine 285 participates in cortisol binding. The N-linked (GlcNAc...) asparagine glycan is linked to asparagine 326. Tryptophan 392 contacts cortisol.

The protein belongs to the serpin family. In terms of processing, glycosylation in position Asn-259 is needed for steroid binding.

The protein localises to the secreted. Functionally, major transport protein for glucocorticoids and progestins in the blood of almost all vertebrate species. In Bos taurus (Bovine), this protein is Corticosteroid-binding globulin (SERPINA6).